The following is a 167-amino-acid chain: MELGLWLLLGLTVTSAAAALPAQPGNAGQERGPGRSGDQEEKRVPAHHRPRRCTCFTYKDKECVYYCHLDIIWINTPEQTVPYGLSNHRGSLRGKRSSGPVPESSQSSPQTRLRCACSGVDDKACAYFCAHVTSYSRRAEKAAAEEKQETGGPRQRLKSRTDKVHQP.

Residues 1–19 form the signal peptide; that stretch reads MELGLWLLLGLTVTSAAAA. Residues 20–50 constitute a propeptide that is removed on maturation; that stretch reads LPAQPGNAGQERGPGRSGDQEEKRVPAHHRP. The segment at 22-45 is disordered; the sequence is AQPGNAGQERGPGRSGDQEEKRVP. Intrachain disulfides connect Cys53/Cys67 and Cys55/Cys63. Positions 74–167 are excised as a propeptide; the sequence is INTPEQTVPY…KSRTDKVHQP (94 aa). The tract at residues 85 to 112 is disordered; sequence LSNHRGSLRGKRSSGPVPESSQSSPQTR. Positions 97–109 are enriched in low complexity; sequence SSGPVPESSQSSP. An endothelin-like region spans residues 115–135; that stretch reads CACSGVDDKACAYFCAHVTSY. The segment covering 140–149 has biased composition (basic and acidic residues); that stretch reads EKAAAEEKQE. A disordered region spans residues 140–167; that stretch reads EKAAAEEKQETGGPRQRLKSRTDKVHQP.

Belongs to the endothelin/sarafotoxin family.

The protein resides in the secreted. Its function is as follows. Endothelins are endothelium-derived vasoconstrictor peptides. This chain is Endothelin-3 (Edn3), found in Rattus norvegicus (Rat).